The primary structure comprises 91 residues: UPF0250 protein NMC1112 (91 aa).

Belongs to the UPF0250 family.

The protein is UPF0250 protein NMC1112 of Neisseria meningitidis serogroup C / serotype 2a (strain ATCC 700532 / DSM 15464 / FAM18).